The following is a 192-amino-acid chain: Adenylate kinase (192 aa).

10-15 (GAGKGT) provides a ligand contact to ATP. Residues 30–59 (STGDMLRAAVAQATEVGKRAKAVMDAGQLV) form an NMP region. AMP is bound by residues Thr-31, Arg-36, 57–59 (QLV), 85–88 (GYPR), and Gln-92. Positions 126-142 (NRVAETVAAGGTVRSDD) are LID. Residue Arg-127 coordinates ATP. The AMP site is built by Arg-139 and Arg-150. Ala-178 is a binding site for ATP.

The protein belongs to the adenylate kinase family. Monomer.

The protein localises to the cytoplasm. It carries out the reaction AMP + ATP = 2 ADP. It functions in the pathway purine metabolism; AMP biosynthesis via salvage pathway; AMP from ADP: step 1/1. In terms of biological role, catalyzes the reversible transfer of the terminal phosphate group between ATP and AMP. Plays an important role in cellular energy homeostasis and in adenine nucleotide metabolism. This chain is Adenylate kinase, found in Sinorhizobium medicae (strain WSM419) (Ensifer medicae).